A 78-amino-acid polypeptide reads, in one-letter code: Acyl carrier protein (78 aa).

Residues 2–77 (SDSAEKVKKI…DAIDYIEANK (76 aa)) enclose the Carrier domain. The residue at position 37 (Ser-37) is an O-(pantetheine 4'-phosphoryl)serine.

This sequence belongs to the acyl carrier protein (ACP) family. 4'-phosphopantetheine is transferred from CoA to a specific serine of apo-ACP by AcpS. This modification is essential for activity because fatty acids are bound in thioester linkage to the sulfhydryl of the prosthetic group.

It localises to the cytoplasm. The protein operates within lipid metabolism; fatty acid biosynthesis. Functionally, carrier of the growing fatty acid chain in fatty acid biosynthesis. The protein is Acyl carrier protein of Sphingopyxis alaskensis (strain DSM 13593 / LMG 18877 / RB2256) (Sphingomonas alaskensis).